Reading from the N-terminus, the 149-residue chain is Transcriptional repressor NrdR (149 aa).

The segment at 3-33 is a zinc-finger region; that stretch reads CPFCSSEDTKVVDSRTTIDGSTKRRRECNNC. Residues 48 to 138 form the ATP-cone domain; that stretch reads IYVVKKDNRR…VYKEFDDIKS (91 aa).

Belongs to the NrdR family. Zn(2+) serves as cofactor.

Its function is as follows. Negatively regulates transcription of bacterial ribonucleotide reductase nrd genes and operons by binding to NrdR-boxes. This chain is Transcriptional repressor NrdR, found in Fusobacterium nucleatum subsp. nucleatum (strain ATCC 25586 / DSM 15643 / BCRC 10681 / CIP 101130 / JCM 8532 / KCTC 2640 / LMG 13131 / VPI 4355).